Consider the following 237-residue polypeptide: uncharacterized protein (237 aa).

The N-acetyltransferase domain maps to 119–237 (VTVRRLTPTD…PAGLDGGLPA (119 aa)).

This is an uncharacterized protein from Streptomyces virginiae (Streptomyces cinnamonensis).